The chain runs to 178 residues: MNATPEKADDLIVVGKIFSVHGVRGEVKVYSFTDPIENLLDYPRWTLRHEGKVKQVELVSGRGSQKGLVVKLKGLDDRDEARLLSGYEICIPRSLLPNLAADEYYWYQLVGLKVINQDEQLFGKVDHMLETGANDVMVVKPCAGSLDDRERLLPYTEQCVLAIDLEAGVMRVEWDADF.

Positions 101 to 178 (ADEYYWYQLV…VMRVEWDADF (78 aa)) constitute a PRC barrel domain.

This sequence belongs to the RimM family. In terms of assembly, binds ribosomal protein uS19.

Its subcellular location is the cytoplasm. An accessory protein needed during the final step in the assembly of 30S ribosomal subunit, possibly for assembly of the head region. Essential for efficient processing of 16S rRNA. May be needed both before and after RbfA during the maturation of 16S rRNA. It has affinity for free ribosomal 30S subunits but not for 70S ribosomes. This chain is Ribosome maturation factor RimM, found in Pseudomonas putida (strain ATCC 700007 / DSM 6899 / JCM 31910 / BCRC 17059 / LMG 24140 / F1).